The following is a 525-amino-acid chain: GMP synthase [glutamine-hydrolyzing] (525 aa).

Positions 9–207 (RILILDFGSQ…VRDICQCEAL (199 aa)) constitute a Glutamine amidotransferase type-1 domain. C86 serves as the catalytic Nucleophile. Catalysis depends on residues H181 and E183. Residues 208–400 (WTPAKIIDDA…LGLPYDMLYR (193 aa)) form the GMPS ATP-PPase domain. An ATP-binding site is contributed by 235–241 (SGGVDSS).

Homodimer.

The catalysed reaction is XMP + L-glutamine + ATP + H2O = GMP + L-glutamate + AMP + diphosphate + 2 H(+). It participates in purine metabolism; GMP biosynthesis; GMP from XMP (L-Gln route): step 1/1. In terms of biological role, catalyzes the synthesis of GMP from XMP. This chain is GMP synthase [glutamine-hydrolyzing], found in Salmonella paratyphi B (strain ATCC BAA-1250 / SPB7).